The sequence spans 386 residues: MDSRDIPPSHNQLQPPPGMLMSHYRNPNAAASPLMVPTSTSQPIQHPRLPFGNQQQSQTFHQQQQQQMDQKTLESLGFGDGSPSSQPMRFGIDDQNQQLQVKKKRGRPRKYTPDGSIALGLAPTSPLLSAASNSYGEGGVGDSGGNGNSVDPPVKRNRGRPPGSSKKQLDALGGTSGVGFTPHVIEVNTGEDIASKVMAFSDQGSRTICILSASGAVSRVMLRQASHSSGIVTYEGRFEIITLSGSVLNYEVNGSTNRSGNLSVALAGPDGGIVGGSVVGNLVAATQVQVIVGSFVAEAKKPKQSSVNIARGQNPEPASAPANMLNFGSVSQGPSSESSEENESGSPAMHRDNNNGIYGAQQQQQQQPLHPHQMQMYQHLWSNHGQ.

Disordered stretches follow at residues 1-175 (MDSR…LGGT) and 303-372 (KQSS…LHPH). Positions 54 to 70 (QQQSQTFHQQQQQQMDQ) are enriched in low complexity. Residues 101–110 (VKKKRGRPRK) show a composition bias toward basic residues. The Bipartite nuclear localization signal motif lies at 102–110 (KKKRGRPRK). The segment at residues 102–114 (KKKRGRPRKYTPD) is a DNA-binding region (a.T hook 1). Positions 126-135 (PLLSAASNSY) are enriched in polar residues. A compositionally biased stretch (gly residues) spans 136–147 (GEGGVGDSGGNG). Positions 155–167 (KRNRGRPPGSSKK) form a DNA-binding region, a.T hook 2. The 143-residue stretch at 174-316 (GTSGVGFTPH…VNIARGQNPE (143 aa)) folds into the PPC domain. Composition is skewed to low complexity over residues 328–337 (GSVSQGPSSE) and 361–372 (QQQQQQQPLHPH).

Its subcellular location is the nucleus. Its function is as follows. Transcription factor that specifically binds AT-rich DNA sequences related to the nuclear matrix attachment regions (MARs). The protein is AT-hook motif nuclear-localized protein 8 of Arabidopsis thaliana (Mouse-ear cress).